Reading from the N-terminus, the 458-residue chain is Tol-Pal system protein TolB (458 aa).

The signal sequence occupies residues 1–23 (MSSVIRKWALTALMAVSSTALFA).

It belongs to the TolB family. In terms of assembly, the Tol-Pal system is composed of five core proteins: the inner membrane proteins TolA, TolQ and TolR, the periplasmic protein TolB and the outer membrane protein Pal. They form a network linking the inner and outer membranes and the peptidoglycan layer.

It is found in the periplasm. Functionally, part of the Tol-Pal system, which plays a role in outer membrane invagination during cell division and is important for maintaining outer membrane integrity. This chain is Tol-Pal system protein TolB, found in Zymomonas mobilis subsp. mobilis (strain ATCC 31821 / ZM4 / CP4).